Reading from the N-terminus, the 73-residue chain is MPKKDGAIEIEGRVIEPLPNAMFRVELANGHKVLAHISGKMRQHYIRILPEDRVVVELSPYDLTRGRIVYRYK.

An S1-like domain is found at 1-73 (MPKKDGAIEI…TRGRIVYRYK (73 aa)).

This sequence belongs to the IF-1 family. As to quaternary structure, component of the 30S ribosomal translation pre-initiation complex which assembles on the 30S ribosome in the order IF-2 and IF-3, IF-1 and N-formylmethionyl-tRNA(fMet); mRNA recruitment can occur at any time during PIC assembly.

Its subcellular location is the cytoplasm. In terms of biological role, one of the essential components for the initiation of protein synthesis. Stabilizes the binding of IF-2 and IF-3 on the 30S subunit to which N-formylmethionyl-tRNA(fMet) subsequently binds. Helps modulate mRNA selection, yielding the 30S pre-initiation complex (PIC). Upon addition of the 50S ribosomal subunit IF-1, IF-2 and IF-3 are released leaving the mature 70S translation initiation complex. The chain is Translation initiation factor IF-1 from Salinispora arenicola (strain CNS-205).